Reading from the N-terminus, the 558-residue chain is MAKSRRDRNSWGGFSEKSSDWSSEEEEPVRKAGPVQVLIVKDDHSFELDEAALNRILLSEAVRDKEVVAVSVAGAFRKGKSFLMDFMLRYMYNQESVDWVGDYNEPLTGFSWRGGSERETTGIQIWSEVFLINKLDGKKVAVLLMDTQGTFDSQSTLRDSATVFALSTMISSIQVYNLSQNVQEDDLQHLQLFTEYGRLAMEETFLKPFQSLIFLVRDWSFPYEFSYGADGGAKFLEKRLKVSGNQHEELQNVRKHIHSCFTNISCFLLPHPGLKVATNPNFDGKLKEIDDEFIKNLKILIPWLLSPESLDIKEINGNKITCRGLLEYFKAYIKIYQGEELPHPKSMLQATAEANNLAAVATAKDTYNKKMEEICGGDKPFLAPNDLQTKHLQLKEDSVKLFRGVKKMGGEEFSRRYLQQLESEIDELYIQYIKHNDSKNIFHAARTPATLFVVIFITYVIAGVTGFIGLDIIASLCNMIMGLTLITLCTWAYIRYSGEYRELGAVIDQVAAALWDQGSTNEALYKLYSAAATHRHLYQQAFPAPKSEPTEQPEKKKI.

The segment at Met-1–Val-29 is disordered. Residues Met-1–Pro-34 are N-terminal hypervariable region (HVR). The Cytoplasmic portion of the chain corresponds to Met-1–Ala-449. Phosphoserine occurs at positions 10, 22, and 23. Positions Asp-64 to Ser-309 constitute a GB1/RHD3-type G domain. Arg-77, Lys-78, Gly-79, Lys-80, Ser-81, Phe-82, Gln-148, Arg-217, Asp-218, Val-276, and Asn-279 together coordinate GDP. Arg-77, Lys-78, Gly-79, Lys-80, Ser-81, and Phe-82 together coordinate GTP. Ser-81 is a binding site for Mg(2+). Residues Arg-217, Asp-218, and Val-276 each coordinate GTP. Residues Met-347–Ser-438 are 3HB (three-helix bundle) domain. Lys-395 is subject to N6-acetyllysine. Residues Glu-412 to Lys-439 are a coiled coil. Positions Lys-439–Thr-447 are linker. Residues Thr-450–Leu-470 traverse the membrane as a helical segment. Asp-471 is a topological domain (lumenal). Residues Ile-472–Ala-492 traverse the membrane as a helical segment. At Tyr-493 to Ile-558 the chain is on the cytoplasmic side. An autoinhibitory domain region spans residues Asn-521–Ile-558.

The protein belongs to the TRAFAC class dynamin-like GTPase superfamily. GB1/RHD3 GTPase family. GB1 subfamily. Monomeric and homodimeric. The homodimer, transiently formed by two molecules on opposing membranes, is the active form mediating ER membrane fusion. Interacts with REEP1, REEP5, RTN3 and RTN4 (via the transmembrane region); these proteins are involved in endoplasmic reticulum tubular network organization. Interacts with ZFYVE27; both proteins are involved in endoplasmic reticulum tubular network organization. Interacts with ARL6IP1; both proteins are involved in endoplasmic reticulum tubular network organization. Interacts with SPAST; the interaction is direct, could recruit SPAST to Golgi membranes. Interacts (via N-terminal region) with MAP4K4 (via CNH regulatory domain). May interact with TMED2. Interacts with CPT1C. Post-translationally, phosphorylated. Phosphorylation, by different kinases, of the N-terminal hypervariable region (HVR) regulates the ATL1-mediated membrane tethering step. In terms of tissue distribution, detected in brain where it is abundant in lamina V of the cerebral cortex. Also expressed within the hippocampus, mainly in pyramidal neurons in CA1 and CA3. Weakly expressed in the striatum and more robustly in amygdala and several thalamic nuclei. Also detected in several mesopontine nuclei (at protein level).

The protein localises to the endoplasmic reticulum membrane. It localises to the golgi apparatus membrane. Its subcellular location is the cell projection. It is found in the axon. It carries out the reaction GTP + H2O = GDP + phosphate + H(+). Its function is as follows. Atlastin-1 (ATL1) is a membrane-anchored GTPase that mediates the GTP-dependent fusion of endoplasmic reticulum (ER) membranes, maintaining the continuous ER network. It facilitates the formation of three-way junctions where ER tubules intersect. Two atlastin-1 on neighboring ER tubules bind GTP and form loose homodimers through the GB1/RHD3-type G domains and 3HB regions. Upon GTP hydrolysis, the 3HB regions tighten, pulling the membranes together to drive their fusion. After fusion, the homodimer disassembles upon release of inorganic phosphate (Pi). Subsequently, GDP dissociates, resetting the monomers to a conformation ready for a new fusion cycle. May also regulate more or less directly Golgi biogenesis. Indirectly regulates axonal development. The polypeptide is Atlastin-1 (Rattus norvegicus (Rat)).